Reading from the N-terminus, the 342-residue chain is MKALVKEKAEPGLWLMDVPEPEIGPGDVLIKVLRTGICGTDLHIRSWDGWAQQAVRTPLVLGHEFVGEVVETGRDVVDIKAGDRVSGEGHLVCGKCRNCQAGRRHLCRATVGLGVGRDGAFAEYVALPAANVWVHRVPVDLDVAAIFDPFGNAVHTALSFPLVGEDVLITGAGPIGLMAAAVARHAGARNVMITDVSEERLELARKIGVSLALNVADTTIADGQRALGLREGFDIGLEMSGRPEAMRDMIANMTHGGRIAMLGLPSQEFPVDWARIVTSMITIKGIYGREMFETWYAMSVLLEGGLDLAPVITGRYGYRDYEAAFADAASGRGGKVILDWTL.

Zn(2+) is bound at residue C38. Active-site charge relay system residues include T40 and H43. Zn(2+) contacts are provided by H63, E64, C93, C96, C99, and C107. Residues I175, D195, R200, 262–264, and 286–287 each bind NAD(+); these read LGL and IY.

It belongs to the zinc-containing alcohol dehydrogenase family. In terms of assembly, homotetramer. The cofactor is Zn(2+).

It is found in the cytoplasm. It catalyses the reaction L-threonine + NAD(+) = (2S)-2-amino-3-oxobutanoate + NADH + H(+). It participates in amino-acid degradation; L-threonine degradation via oxydo-reductase pathway; glycine from L-threonine: step 1/2. In terms of biological role, catalyzes the NAD(+)-dependent oxidation of L-threonine to 2-amino-3-ketobutyrate. The polypeptide is L-threonine 3-dehydrogenase (Streptomyces avermitilis (strain ATCC 31267 / DSM 46492 / JCM 5070 / NBRC 14893 / NCIMB 12804 / NRRL 8165 / MA-4680)).